The primary structure comprises 118 residues: Large ribosomal subunit protein bL17 (118 aa).

Belongs to the bacterial ribosomal protein bL17 family. Part of the 50S ribosomal subunit. Contacts protein L32.

The chain is Large ribosomal subunit protein bL17 from Campylobacter hominis (strain ATCC BAA-381 / DSM 21671 / CCUG 45161 / LMG 19568 / NCTC 13146 / CH001A).